Here is a 738-residue protein sequence, read N- to C-terminus: Putative cyclic nucleotide-gated ion channel 7 (738 aa).

The Cytoplasmic segment spans residues 1–104 (MYKSQYISGQ…DKTLLVWNRL (104 aa)). Residues 105 to 125 (FVISCILAVSVDPLFFYLPIV) traverse the membrane as a helical segment. The Extracellular segment spans residues 126-139 (DNSGSSCIGIDTKL). A helical membrane pass occupies residues 140 to 160 (AVTTTTLRTIVDVFYLTRMAL). Residues 161 to 193 (QFRTAYIAPSSRVFGRGELVIDPAKIAERYLTR) are Cytoplasmic-facing. Residues 194 to 214 (YFVVDFLAVLPLPQIAVWKFL) form a helical membrane-spanning segment. Over 215 to 227 (HGSKGSDVLPTKT) the chain is Extracellular. A helical transmembrane segment spans residues 228–248 (ALLNIVIVQYIPRFVRFIPLT). The Cytoplasmic portion of the chain corresponds to 249–268 (SELKKTAGAFAEGAWAGAAY). A helical transmembrane segment spans residues 269-289 (YLLWYMLASHITGAFWYMLSV). The Extracellular portion of the chain corresponds to 290-395 (ERNDTCWRFA…GQGLQTSTFP (106 aa)). A helical transmembrane segment spans residues 396–416 (GEVLFSIAIAIAGLLLFALLI). Topologically, residues 417–738 (GNMQTYLQSL…KPPEPDFDAE (322 aa)) are cytoplasmic. A nucleoside 3',5'-cyclic phosphate is bound by residues 502 to 632 (LFAN…TFRF) and E573. Positions 618–633 (FRRLHSRQVQQTFRFY) are calmodulin-binding. In terms of domain architecture, IQ spans 638–667 (RTWASCFIQAAWRRYSRRKNAELRRIEEKE). Disordered stretches follow at residues 671-693 (GYED…SESS) and 715-738 (LRSS…FDAE).

It belongs to the cyclic nucleotide-gated cation channel (TC 1.A.1.5) family. Homotetramer or heterotetramer.

The protein resides in the cell membrane. In terms of biological role, putative cyclic nucleotide-gated ion channel. This Arabidopsis thaliana (Mouse-ear cress) protein is Putative cyclic nucleotide-gated ion channel 7 (CNGC7).